The chain runs to 549 residues: Cytoplasmic trehalase (549 aa).

Residues arginine 168, 175–176 (WD), asparagine 212, 221–223 (RSQ), 292–294 (RDE), and glycine 324 each bind substrate. Active-site proton donor/acceptor residues include aspartate 326 and glutamate 509. Residue glutamate 525 coordinates substrate.

This sequence belongs to the glycosyl hydrolase 37 family. As to quaternary structure, monomer.

Its subcellular location is the cytoplasm. The catalysed reaction is alpha,alpha-trehalose + H2O = alpha-D-glucose + beta-D-glucose. The protein operates within glycan degradation; trehalose degradation; D-glucose from alpha,alpha-trehalose: step 1/1. Functionally, hydrolyzes trehalose to glucose. Could be involved, in cells returning to low osmolarity conditions, in the utilization of the accumulated cytoplasmic trehalose, which was synthesized in response to high osmolarity. The sequence is that of Cytoplasmic trehalase from Shigella flexneri serotype 5b (strain 8401).